The following is a 333-amino-acid chain: MLNAILVPVGILGVFGLIFGIGLAIAAKVFEVYEDPRVPLVRAALPGANCGGCGLPGCDALAANIVGGSAAIDACPVGGASCAAAVAEIMGMEAGSAVKKVATVICQGTCETAPNRAEYYGEMDCREAMIASGGSKGCRYGCLGYGTCKAVCPFDAIVIGEDGLPKVDPEKCTSCGKCVEACPKSIMTLVPEAQEVIVKCHNFDKGKIARLSCTTACIACGACVKACRFDAITVENNCAKIDYDKCRQCYECVDKCPMNCISGDVEYGKSTAYIIEENCIACGLCAKNCPVNAITGEIKKPPYVIDHDMCIGCGICFDKCRKSAIEMRPNKTK.

The interval 1–27 is hydrophobic; sequence MLNAILVPVGILGVFGLIFGIGLAIAA. The 4Fe-4S domain occupies 33–92; that stretch reads YEDPRVPLVRAALPGANCGGCGLPGCDALAANIVGGSAAIDACPVGGASCAAAVAEIMGM. [4Fe-4S] cluster-binding residues include cysteine 50, cysteine 53, cysteine 58, cysteine 75, cysteine 138, cysteine 142, cysteine 148, cysteine 152, cysteine 172, cysteine 175, cysteine 178, cysteine 182, cysteine 217, cysteine 220, cysteine 223, cysteine 227, cysteine 246, cysteine 249, cysteine 252, cysteine 256, cysteine 279, cysteine 282, cysteine 285, cysteine 289, cysteine 310, cysteine 313, cysteine 316, and cysteine 320. 4Fe-4S ferredoxin-type domains follow at residues 126 to 162, 163 to 192, 207 to 237, 239 to 266, 270 to 299, and 301 to 330; these read REAM…IGED, GLPK…LVPE, KIAR…VENN, AKID…GDVE, STAY…GEIK, and PPYV…MRPN.

Belongs to the 4Fe4S bacterial-type ferredoxin family. RnfB subfamily. The complex is composed of six subunits: RnfA, RnfB, RnfC, RnfD, RnfE and RnfG. The cofactor is [4Fe-4S] cluster.

The protein resides in the cell membrane. The enzyme catalyses 2 reduced [2Fe-2S]-[ferredoxin] + Na(+)(in) + NAD(+) + H(+) = 2 oxidized [2Fe-2S]-[ferredoxin] + Na(+)(out) + NADH. Part of a membrane-bound complex that couples electron transfer with translocation of ions across the membrane. Couples electron transfer from reduced ferredoxin to NAD(+) with electrogenic movement of Na(+) out of the cell. Involved in caffeate respiration. This chain is Na(+)-translocating ferredoxin:NAD(+) oxidoreductase complex subunit B, found in Acetobacterium woodii (strain ATCC 29683 / DSM 1030 / JCM 2381 / KCTC 1655 / WB1).